Here is a 636-residue protein sequence, read N- to C-terminus: MKKNFFVSTPIYYVNGDPHVGSAYTTIAADVINRYNKAMGMDTHFVTGLDEHGQKVEQAAKQNGFTPQAWTDKMTPNFKNMWAALDIKYDDFIRTTEDRHKKAVKRILDIVNAKGDIYKGEYEGKYCVSCETFFPENQLNGSNKCPDCGKDLTVLKEESYFFKMSKYADALLKHIDEHPDFILPHSRRNEVISFIKQGLQDLSISRNTFSWGIPIDFAPGHITYVWFDALTNYITSAGFENDENKFDKFWNNSRVVHLIGKDIIRFHAIIWPCMLLSAGIKLPDSIVAHGWWTSEGEKMSKSRGNVVNPYDEIKKYGVDAFRYYLLREANFGTDGDYSTKGIIGRLNSDLANDLGNLLNRTLGMYKKYFNGTIVSSSTVEPIDDEIKSMFNDVVKDVEKYMYLFEFSRALETIWKFISRLNKYIDETMPWTLAKNEAKKARLAAVMNILCEGLYKIAFLIAPYMPESAQKISNQLGIDKDITNLKFDDIKEWSIFKEGHKLGEASPIFPRIEIEKEEIVETKKELKIENPVDIKEFNKIEIKVVEILDVDKVEGADKLLKFKVFDGEFERQIISGLAKFYPDFKKLISEKVLAVVNLKFTKLKGEISQGMLLTTEDKNGVSLIKIDKTVEAGAIVS.

Residues 12–22 (YYVNGDPHVGS) carry the 'HIGH' region motif. Zn(2+) is bound by residues Cys-127, Cys-130, Cys-145, and Cys-148. Residues 298–302 (KMSKS) carry the 'KMSKS' region motif. Lys-301 is a binding site for ATP. The region spanning 535–636 (EFNKIEIKVV…KTVEAGAIVS (102 aa)) is the tRNA-binding domain.

This sequence belongs to the class-I aminoacyl-tRNA synthetase family. MetG type 2A subfamily. Homodimer. Zn(2+) serves as cofactor.

The protein resides in the cytoplasm. It catalyses the reaction tRNA(Met) + L-methionine + ATP = L-methionyl-tRNA(Met) + AMP + diphosphate. Its function is as follows. Is required not only for elongation of protein synthesis but also for the initiation of all mRNA translation through initiator tRNA(fMet) aminoacylation. The protein is Methionine--tRNA ligase (metG) of Fusobacterium nucleatum subsp. nucleatum (strain ATCC 25586 / DSM 15643 / BCRC 10681 / CIP 101130 / JCM 8532 / KCTC 2640 / LMG 13131 / VPI 4355).